The primary structure comprises 182 residues: Crossover junction endodeoxyribonuclease RuvC (182 aa).

Catalysis depends on residues aspartate 7, glutamate 69, and aspartate 141. Residues aspartate 7, glutamate 69, and aspartate 141 each coordinate Mg(2+).

This sequence belongs to the RuvC family. In terms of assembly, homodimer which binds Holliday junction (HJ) DNA. The HJ becomes 2-fold symmetrical on binding to RuvC with unstacked arms; it has a different conformation from HJ DNA in complex with RuvA. In the full resolvosome a probable DNA-RuvA(4)-RuvB(12)-RuvC(2) complex forms which resolves the HJ. It depends on Mg(2+) as a cofactor.

The protein localises to the cytoplasm. It catalyses the reaction Endonucleolytic cleavage at a junction such as a reciprocal single-stranded crossover between two homologous DNA duplexes (Holliday junction).. Functionally, the RuvA-RuvB-RuvC complex processes Holliday junction (HJ) DNA during genetic recombination and DNA repair. Endonuclease that resolves HJ intermediates. Cleaves cruciform DNA by making single-stranded nicks across the HJ at symmetrical positions within the homologous arms, yielding a 5'-phosphate and a 3'-hydroxyl group; requires a central core of homology in the junction. The consensus cleavage sequence is 5'-(A/T)TT(C/G)-3'. Cleavage occurs on the 3'-side of the TT dinucleotide at the point of strand exchange. HJ branch migration catalyzed by RuvA-RuvB allows RuvC to scan DNA until it finds its consensus sequence, where it cleaves and resolves the cruciform DNA. This chain is Crossover junction endodeoxyribonuclease RuvC, found in Polaromonas sp. (strain JS666 / ATCC BAA-500).